We begin with the raw amino-acid sequence, 580 residues long: NADH-ubiquinone oxidoreductase chain 5 (580 aa).

16 helical membrane passes run 12–32 (FYFLMSISLSLFLISLKFLLM), 50–70 (IVMTFLFDWMSLMFMSFVLLI), 92–112 (ILLVLMFVMSMMMLIISPNLI), 113–133 (SILLGWDGLGLVSYCLVIYFQ), 153–173 (VALLLAIAWMLNYGSWNYIFY), 183–203 (MMIIGGLVMLAAMTKSAQIPF), 215–235 (TPVSALVHSSTLVTAGVYLLI), 244–264 (WWMAQFLLLVSGLTMFMAGLG), 274–293 (IIALSTLSQLGLMMSILSMG), 298–320 (AFFHLLTHALFKALLFMCAGSII), 343–363 (CSCFNVANLALCGMPFLAGFY), 367–387 (LILEMVMLSYVNVFSFFLFFF), 427–447 (ICFLTVMAVIGGSMLSWLMFL), 463–483 (LFVCIVGGLMGYLISDVKLFF), 496–516 (FVGSMWFMPVISTLGVINYPL), and 560–580 (IYLLSYMLWFIILLMLVVLVN).

Belongs to the complex I subunit 5 family.

The protein localises to the mitochondrion inner membrane. The enzyme catalyses a ubiquinone + NADH + 5 H(+)(in) = a ubiquinol + NAD(+) + 4 H(+)(out). Its function is as follows. Core subunit of the mitochondrial membrane respiratory chain NADH dehydrogenase (Complex I) that is believed to belong to the minimal assembly required for catalysis. Complex I functions in the transfer of electrons from NADH to the respiratory chain. The immediate electron acceptor for the enzyme is believed to be ubiquinone. In Anopheles gambiae (African malaria mosquito), this protein is NADH-ubiquinone oxidoreductase chain 5 (mt:ND5).